A 220-amino-acid chain; its full sequence is MSTGTANSAVSSKSTNSTTSTSKVPVNEKSNNSQNANTSTASIIKSYREIVNDPKNLDEAANYLYQSLLDDAVVGVFLEIHHLRKTGNLTAMDGVNEDESETSFRIVDMPNFDIFGISTAKKPMDCTCPNCDRPVSAARFAPHLEKCMGMGRISSRIASRRLATKESNSASSSSSSSYLQTTNAGSDDEDDVDWSSEKRRKKSSQNSRNNGSKKNNGKTF.

A disordered region spans residues 1-38 (MSTGTANSAVSSKSTNSTTSTSKVPVNEKSNNSQNANT). An SGF11-type zinc finger spans residues 126 to 147 (CTCPNCDRPVSAARFAPHLEKC). Low complexity-rich tracts occupy residues 160–177 (RRLA…SSSS) and 204–220 (SQNS…GKTF). Positions 160-220 (RRLATKESNS…GSKKNNGKTF (61 aa)) are disordered.

Belongs to the SGF11 family. As to quaternary structure, component of some SAGA transcription coactivator-HAT complexes. Within the SAGA complex, participates in a subcomplex of SAGA called the DUB module (deubiquitination module).

It is found in the nucleus. In terms of biological role, component of the transcription regulatory histone acetylation (HAT) complex SAGA, a multiprotein complex that activates transcription by remodeling chromatin and mediating histone acetylation and deubiquitination. Within the SAGA complex, participates in a subcomplex that specifically deubiquitinates histone H2B. The SAGA complex is recruited to specific gene promoters by activators, where it is required for transcription. The chain is SAGA-associated factor 11 homolog from Musca domestica (House fly).